The sequence spans 355 residues: UDP-3-O-acylglucosamine N-acyltransferase (355 aa).

H252 (proton acceptor) is an active-site residue.

It belongs to the transferase hexapeptide repeat family. LpxD subfamily. Homotrimer.

The enzyme catalyses a UDP-3-O-[(3R)-3-hydroxyacyl]-alpha-D-glucosamine + a (3R)-hydroxyacyl-[ACP] = a UDP-2-N,3-O-bis[(3R)-3-hydroxyacyl]-alpha-D-glucosamine + holo-[ACP] + H(+). Its pathway is bacterial outer membrane biogenesis; LPS lipid A biosynthesis. Its function is as follows. Catalyzes the N-acylation of UDP-3-O-acylglucosamine using 3-hydroxyacyl-ACP as the acyl donor. Is involved in the biosynthesis of lipid A, a phosphorylated glycolipid that anchors the lipopolysaccharide to the outer membrane of the cell. The chain is UDP-3-O-acylglucosamine N-acyltransferase from Polynucleobacter necessarius subsp. necessarius (strain STIR1).